The sequence spans 468 residues: ATP synthase subunit beta (468 aa).

ATP is bound at residue 148–155 (GGAGVGKT).

This sequence belongs to the ATPase alpha/beta chains family. F-type ATPases have 2 components, CF(1) - the catalytic core - and CF(0) - the membrane proton channel. CF(1) has five subunits: alpha(3), beta(3), gamma(1), delta(1), epsilon(1). CF(0) has three main subunits: a(1), b(2) and c(9-12). The alpha and beta chains form an alternating ring which encloses part of the gamma chain. CF(1) is attached to CF(0) by a central stalk formed by the gamma and epsilon chains, while a peripheral stalk is formed by the delta and b chains.

The protein resides in the cell inner membrane. It catalyses the reaction ATP + H2O + 4 H(+)(in) = ADP + phosphate + 5 H(+)(out). Functionally, produces ATP from ADP in the presence of a proton gradient across the membrane. The catalytic sites are hosted primarily by the beta subunits. This is ATP synthase subunit beta from Xanthomonas euvesicatoria pv. vesicatoria (strain 85-10) (Xanthomonas campestris pv. vesicatoria).